Here is a 234-residue protein sequence, read N- to C-terminus: Protein UL20 homolog (234 aa).

Helical transmembrane passes span 82 to 102, 112 to 132, 153 to 173, and 191 to 211; these read VVLFGLSTFVLRPSCCLIFLF, FLILGTTITAFFYGTLMLEMY, IGALSMLGPIIFVAISYNMIF, and TSGFVIYLVMIASLAYSITSI.

The protein belongs to the alphaherpesvirinae UL20 family. As to quaternary structure, interacts with gK (via N-terminus); this interaction plays a role in the coordinate transport of UL20 and gK to the trans-Golgi network (TGN), and is required for their cell surface expression. Interacts with gB.

The protein localises to the virion. The protein resides in the host cell membrane. It localises to the host endosome membrane. It is found in the host Golgi apparatus membrane. Its subcellular location is the host nucleus membrane. Functionally, plays an essential role in egress of virus particles from the nucleus, cytoplasmic envelopment and virus-induced cell fusion. Forms a functional protein complex with gK and this interaction is absolutely essential for their coordinate intracellular transport, gK glycosylation, expression on host cell surface, and function. Together, they modulate gB-mediated virus-induced cell fusion and virion egress and therefore actively participate in these processes. The sequence is that of Protein UL20 homolog (MDV032) from Gallid herpesvirus 2 (strain Chicken/Md5/ATCC VR-987) (GaHV-2).